The chain runs to 651 residues: Meiotic expression up-regulated protein 6 (651 aa).

Composition is skewed to basic and acidic residues over residues 1 to 12 (MSYEGREERPEQ) and 21 to 30 (VSEHNEHDSG). Residues 1–102 (MSYEGREERP…EKKSKKKAKD (102 aa)) form a disordered region. The span at 72 to 83 (TVDNIDPADDDP) shows a compositional bias: acidic residues. A compositionally biased stretch (basic and acidic residues) spans 90–102 (KVEEKKSKKKAKD). Residues 194–261 (CRGLLFYSKS…WITDLKNAIA (68 aa)) enclose the PH domain. Disordered stretches follow at residues 365-430 (TVEA…GTPI), 468-514 (VATP…KGGN), and 587-630 (TIKP…QMPQ). Polar residues-rich tracts occupy residues 410–429 (ESTS…NGTP) and 478–490 (PSTA…SVVS). The span at 497–514 (KKAGKKHHRHHKKKKGGN) shows a compositional bias: basic residues. The segment covering 587 to 604 (TIKPETPLTPTTTPTPRT) has biased composition (low complexity).

This Schizosaccharomyces pombe (strain 972 / ATCC 24843) (Fission yeast) protein is Meiotic expression up-regulated protein 6 (meu6).